We begin with the raw amino-acid sequence, 461 residues long: ATP synthase subunit beta (461 aa).

151 to 158 is a binding site for ATP; the sequence is GGAGVGKT.

This sequence belongs to the ATPase alpha/beta chains family. In terms of assembly, F-type ATPases have 2 components, CF(1) - the catalytic core - and CF(0) - the membrane proton channel. CF(1) has five subunits: alpha(3), beta(3), gamma(1), delta(1), epsilon(1). CF(0) has three main subunits: a(1), b(2) and c(9-12). The alpha and beta chains form an alternating ring which encloses part of the gamma chain. CF(1) is attached to CF(0) by a central stalk formed by the gamma and epsilon chains, while a peripheral stalk is formed by the delta and b chains.

The protein resides in the cell inner membrane. It catalyses the reaction ATP + H2O + 4 H(+)(in) = ADP + phosphate + 5 H(+)(out). Functionally, produces ATP from ADP in the presence of a proton gradient across the membrane. The catalytic sites are hosted primarily by the beta subunits. The polypeptide is ATP synthase subunit beta (Pseudoalteromonas translucida (strain TAC 125)).